A 934-amino-acid chain; its full sequence is Complement component C6 (934 aa).

The signal sequence occupies residues 1 to 21 (MTRHLTLCFILLVMLIDKSEA). Intrachain disulfides connect Cys-22–Cys-61, Cys-24–Cys-65, Cys-35–Cys-73, Cys-39–Cys-78, Cys-82–Cys-117, Cys-93–Cys-127, Cys-96–Cys-133, Cys-140–Cys-151, Cys-146–Cys-164, Cys-158–Cys-173, and Cys-180–Cys-218. TSP type-1 domains follow at residues 22–79 (CFCD…QTCP) and 81–134 (NCVL…KLCK). Residues 138 to 175 (TNCKNKFLCDSGRCIPSKLECNGENDCGDNSDERNCGR) form the LDL-receptor class A domain. Ca(2+) is bound by residues Leu-156, Asn-159, Glu-161, Asp-163, Asp-169, and Glu-170. The 347-residue stretch at 176-522 (TKPVCTRIYT…EYAAKFDPCQ (347 aa)) folds into the MACPF domain. Residues 278-290 (FFPIPIFHFSEKN) traverse the membrane as a beta stranded segment. Residue Asn-324 is glycosylated (N-linked (GlcNAc...) asparagine). Intrachain disulfides connect Cys-399–Cys-420, Cys-499–Cys-623, Cys-521–Cys-570, Cys-523–Cys-539, Cys-526–Cys-541, Cys-543–Cys-552, Cys-577–Cys-611, Cys-589–Cys-601, Cys-644–Cys-686, Cys-672–Cys-699, Cys-704–Cys-746, Cys-732–Cys-761, Cys-773–Cys-823, Cys-784–Cys-801, Cys-786–Cys-837, and Cys-793–Cys-816. A beta stranded membrane pass occupies residues 402–415 (YETKKLKFLYMEIH). An EGF-like domain is found at 523–553 (CAPCPNNGRPRLSGTECLCVCQSGTYGENCE). The TSP type-1 3 domain maps to 565 to 612 (DGNWGCWSSWSACNAAYRRSRTRECNNPAPQRGGQSCGGKDQQEEDCT). CCP regions lie at residues 611–688 (CTVS…RCLP) and 689–765 (DRTW…EQAI). Sushi domains lie at 642-701 (SGCS…ECQR) and 702-763 (TSCL…TCEQ). The interval 642-934 (SGCSQPPLPE…EILNPGRCPD (293 aa)) is C5b-binding domain. A factor I module (FIM) 1 region spans residues 766 to 840 (LTKSKDLCPP…FVHSGSCQEG (75 aa)). A Kazal-like 1 domain is found at 785 to 839 (ICMSPEEDCSAYSEDLCIFDGGSSQYFTSSACKFLAGKCLNNTQSHFVHSGSCQE). 3 N-linked (GlcNAc...) asparagine glycosylation sites follow: Asn-825, Asn-855, and Asn-872. Residues 858–934 (KRVSCGYNTC…EILNPGRCPD (77 aa)) are factor I module (FIM) 2. 5 disulfide bridges follow: Cys-862–Cys-873, Cys-867–Cys-919, Cys-880–Cys-897, Cys-882–Cys-932, and Cys-888–Cys-912. The 59-residue stretch at 876–934 (HTSNCVCLLPPQCSKDENQLYCVKIGSSMREKTVNICTLGAVRCANIKVEILNPGRCPD) folds into the Kazal-like 2 domain.

This sequence belongs to the complement C6/C7/C8/C9 family. As to quaternary structure, component of the membrane attack complex (MAC), composed of complement C5b, C6, C7, C8A, C8B, C8G and multiple copies of the pore-forming subunit C9. All cysteine residues are assumed to be cross-linked to one another. Individual modules containing an even number of conserved cysteine residues are supposed to have disulfide linkages only within the same module.

It localises to the secreted. The protein resides in the target cell membrane. Membrane attack complex (MAC) assembly is inhibited by CD59, thereby protecting self-cells from damage during complement activation. MAC assembly is also inhibited by clusterin (CLU) chaperones that inhibit polymerization of C9. Functionally, component of the membrane attack complex (MAC), a multiprotein complex activated by the complement cascade, which inserts into a target cell membrane and forms a pore, leading to target cell membrane rupture and cell lysis. The MAC is initiated by proteolytic cleavage of C5 into complement C5b in response to the classical, alternative, lectin and GZMK complement pathways. The complement pathways consist in a cascade of proteins that leads to phagocytosis and breakdown of pathogens and signaling that strengthens the adaptive immune system. Together with component C5b, involved in MAC complex assembly: complement C5b and C6 associate with the outer leaflet of target cell membrane, reducing the energy for membrane bending. The chain is Complement component C6 from Mus musculus (Mouse).